The chain runs to 807 residues: Spondin-1 (807 aa).

A signal peptide spans 1-28; it reads MRLSPAPLRLSRGPALLALALPLAAALA. In terms of domain architecture, Reelin spans 29–194; it reads FSDETLDKVA…DPTLDGVTDR (166 aa). 17 disulfide bridges follow: C44–C128, C156–C182, C199–C336, C200–C340, C202–C415, C443–C480, C454–C489, C459–C494, C502–C538, C513–C517, C548–C554, C559–C595, C570–C574, C605–C610, C615–C650, C626–C630, and C660–C665. The Spondin domain occupies 195 to 388; that stretch reads PILDCCACGT…LTSLDHPQSP (194 aa). N-linked (GlcNAc...) asparagine glycosylation is present at N214. Residues D325, D354, and D358 each coordinate Ca(2+). TSP type-1 domains follow at residues 442–495, 501–555, 558–611, 614–666, and 668–721; these read TCIY…PGCS, TCTM…EECS, SCLV…PECH, PCLL…PECP, and DCEL…RKCL. N681 carries an N-linked (GlcNAc...) asparagine glycan. Residues 732 to 746 are compositionally biased toward basic and acidic residues; it reads REARESRRSEQLREE. The tract at residues 732–752 is disordered; sequence REARESRRSEQLREESDGEQF. Positions 754–806 constitute a TSP type-1 6 domain; the sequence is GCRMRPWTAWSECTKLCGGGIQERYMTVKKRFKSSQFTSCKDKKEIRACNVHP.

In terms of assembly, binds to the central extracellular domain of APP and inhibits beta-secretase cleavage of APP. Expressed at high levels in the floor plate.

It is found in the secreted. The protein localises to the extracellular space. Its subcellular location is the extracellular matrix. Its function is as follows. Cell adhesion protein that promotes the attachment of spinal cord and sensory neuron cells and the outgrowth of neurites in vitro. May contribute to the growth and guidance of axons in both the spinal cord and the PNS. The chain is Spondin-1 (Spon1) from Rattus norvegicus (Rat).